Consider the following 522-residue polypeptide: Target of rapamycin complex 2 subunit MAPKAP1 (522 aa).

At A2 the chain carries N-acetylalanine. Positions 2-184 (AFLDNPTIIL…KKIDVYLPLH (183 aa)) are interaction with MAP3K2. Residues 2–267 (AFLDNPTIIL…GFSTLALVEK (266 aa)) form an interaction with NBN region. The interval 38-59 (LEKTHPPSVPGDSGSEVQGSSG) is disordered. T86 is subject to Phosphothreonine. S128, S186, S315, and S356 each carry phosphoserine. One can recognise a CRIM domain in the interval 139–267 (QSILSVRLEQ…GFSTLALVEK (129 aa)). The segment at 279 to 353 (LFVRINAAHG…QNAWEFCLVR (75 aa)) is SIN1-type RBD. An SIN1-type PH domain is found at 382-487 (HYKSFKVSMI…IVLKVNYILE (106 aa)). Residue R393 participates in a 1,2-diacyl-sn-glycero-3-phospho-(1D-myo-inositol-3,4,5-trisphosphate) binding. T398 is modified (phosphothreonine). Residues K428 and K464 each contribute to the a 1,2-diacyl-sn-glycero-3-phospho-(1D-myo-inositol-3,4,5-trisphosphate) site. The tract at residues 468–522 (FESDAATVSEIVLKVNYILESRASTARADYFAQKQRKLNRRTSFSFQKEKKSGQQ) is interaction with ATF2. At S510 the chain carries Phosphoserine.

This sequence belongs to the SIN1 family. As to quaternary structure, component of the mechanistic target of rapamycin complex 2 (mTORC2), consisting in two heterotretramers composed of MTOR, MLST8, RICTOR and MAPKAP1/SIN1. The mTORC2 core complex associates with PRR5/PROTOR1 and/or PRR5L/PROTOR2. Contrary to mTORC1, mTORC2 does not bind to and is not sensitive to FKBP12-rapamycin. Interacts with MAP3K2. Interacts with ATF2. Interacts with MAPK8. Interacts with GTP-bound HRAS and KRAS; inhibiting their activity. Interacts with IFNAR2. Post-translationally, phosphorylation at Ser-128 by PKC promotes relocalization to the perinuclear region, where the mTORC2 complex specifically mediates phosphorylation of SGK1. Phosphorylated at Thr-86 by AKT1 or RPS6KB1 in the presence of growth factors; the effect of this phosphorylation is however unclear. According to two studies, phosphorylation at Thr-86 by AKT1 is part of a positive feedback loop that increases mTORC2 activation. According to another study, phosphorylation at Thr-86 and Thr-398 by RPS6KB1 promotes dissociation from the mTORC2 complex, leading to inhibit mTORC2 signaling.

The protein resides in the cell membrane. It is found in the endoplasmic reticulum membrane. It localises to the early endosome membrane. The protein localises to the late endosome membrane. Its subcellular location is the lysosome membrane. The protein resides in the golgi apparatus membrane. It is found in the mitochondrion outer membrane. It localises to the cytoplasm. The protein localises to the perinuclear region. Its subcellular location is the nucleus. With respect to regulation, phosphatidylinositol 3,4,5-trisphosphate (PI(3,4,5)P3) promotes MTOR activation by relieving MAPKAP1/SIN1-mediated inhibition of MTOR that takes place in absence of PI(3,4,5)P3. Its function is as follows. Component of the mechanistic target of rapamycin complex 2 (mTORC2), which transduces signals from growth factors to pathways involved in proliferation, cytoskeletal organization, lipogenesis and anabolic output. In response to growth factors, mTORC2 phosphorylates and activates AGC protein kinase family members, including AKT (AKT1, AKT2 and AKT3), PKC (PRKCA, PRKCB and PRKCE) and SGK1. In contrast to mTORC1, mTORC2 is nutrient-insensitive. Within the mTORC2 complex, MAPKAP1/SIN1 acts as a substrate adapter which recognizes and binds AGC protein kinase family members for phosphorylation by MTOR. mTORC2 plays a critical role in AKT1 activation by mediating phosphorylation of different sites depending on the context, such as 'Thr-450', 'Ser-473', 'Ser-477' or 'Thr-479', facilitating the phosphorylation of the activation loop of AKT1 on 'Thr-308' by PDPK1/PDK1 which is a prerequisite for full activation. mTORC2 catalyzes the phosphorylation of SGK1 at 'Ser-422' and of PRKCA on 'Ser-657'. The mTORC2 complex also phosphorylates various proteins involved in insulin signaling, such as FBXW8 and IGF2BP1. mTORC2 acts upstream of Rho GTPases to regulate the actin cytoskeleton, probably by activating one or more Rho-type guanine nucleotide exchange factors. mTORC2 promotes the serum-induced formation of stress-fibers or F-actin. MAPKAP1 inhibits MAP3K2 by preventing its dimerization and autophosphorylation. Inhibits HRAS and KRAS independently of mTORC2 complex. Enhances osmotic stress-induced phosphorylation of ATF2 and ATF2-mediated transcription. Involved in ciliogenesis, regulates cilia length through its interaction with CCDC28B independently of mTORC2 complex. The protein is Target of rapamycin complex 2 subunit MAPKAP1 of Rattus norvegicus (Rat).